Reading from the N-terminus, the 289-residue chain is ATP phosphoribosyltransferase (289 aa).

This sequence belongs to the ATP phosphoribosyltransferase family. Long subfamily. Mg(2+) serves as cofactor.

It is found in the cytoplasm. The enzyme catalyses 1-(5-phospho-beta-D-ribosyl)-ATP + diphosphate = 5-phospho-alpha-D-ribose 1-diphosphate + ATP. It functions in the pathway amino-acid biosynthesis; L-histidine biosynthesis; L-histidine from 5-phospho-alpha-D-ribose 1-diphosphate: step 1/9. Feedback inhibited by histidine. In terms of biological role, catalyzes the condensation of ATP and 5-phosphoribose 1-diphosphate to form N'-(5'-phosphoribosyl)-ATP (PR-ATP). Has a crucial role in the pathway because the rate of histidine biosynthesis seems to be controlled primarily by regulation of HisG enzymatic activity. The protein is ATP phosphoribosyltransferase of Methanosarcina acetivorans (strain ATCC 35395 / DSM 2834 / JCM 12185 / C2A).